The primary structure comprises 494 residues: Glutamyl-tRNA(Gln) amidotransferase subunit A (494 aa).

Active-site charge relay system residues include Lys-88 and Ser-163. Ser-187 (acyl-ester intermediate) is an active-site residue.

This sequence belongs to the amidase family. GatA subfamily. As to quaternary structure, heterotrimer of A, B and C subunits.

The enzyme catalyses L-glutamyl-tRNA(Gln) + L-glutamine + ATP + H2O = L-glutaminyl-tRNA(Gln) + L-glutamate + ADP + phosphate + H(+). Allows the formation of correctly charged Gln-tRNA(Gln) through the transamidation of misacylated Glu-tRNA(Gln) in organisms which lack glutaminyl-tRNA synthetase. The reaction takes place in the presence of glutamine and ATP through an activated gamma-phospho-Glu-tRNA(Gln). This Corynebacterium diphtheriae (strain ATCC 700971 / NCTC 13129 / Biotype gravis) protein is Glutamyl-tRNA(Gln) amidotransferase subunit A.